The chain runs to 200 residues: Recombination protein RecR (200 aa).

The C4-type zinc finger occupies 57 to 72 (CRQCRTLTEQELCPQC). A Toprim domain is found at 80-175 (TQLCVVEGPV…TATRIAHGVP (96 aa)).

The protein belongs to the RecR family.

Its function is as follows. May play a role in DNA repair. It seems to be involved in an RecBC-independent recombinational process of DNA repair. It may act with RecF and RecO. This Pseudomonas entomophila (strain L48) protein is Recombination protein RecR.